Reading from the N-terminus, the 292-residue chain is Galactinol synthase 2 (292 aa).

Lys-65 is a catalytic residue. 3 residues coordinate Mn(2+): Asp-81, Asp-83, and His-218.

Belongs to the glycosyltransferase 8 family. Galactosyltransferase subfamily. Requires a divalent metal cation as cofactor. Present in phloem-associated intermediary cells. Weakly expressed in leaves.

The protein resides in the cytoplasm. It catalyses the reaction myo-inositol + UDP-alpha-D-galactose = alpha-D-galactosyl-(1-&gt;3)-1D-myo-inositol + UDP + H(+). In terms of biological role, may promote plant stress tolerance. Galactinol synthase mainly involved in the biosynthesis of transport raffinose family oligosaccharides (RFOs) that function as osmoprotectants. The sequence is that of Galactinol synthase 2 (GOLS2) from Ajuga reptans (Bugle).